We begin with the raw amino-acid sequence, 374 residues long: Carbamoyl phosphate synthase small chain (374 aa).

Positions 1-185 (MKAILALEDG…DVSSGYKWSD (185 aa)) are CPSase. L-glutamine is bound by residues S45, G237, and G239. One can recognise a Glutamine amidotransferase type-1 domain in the interval 189–374 (RLVLVDYGVK…RNLVKDATGK (186 aa)). C264 acts as the Nucleophile in catalysis. Residues L265, Q268, N306, G308, and F309 each coordinate L-glutamine. Active-site residues include H347 and E349.

It belongs to the CarA family. In terms of assembly, composed of two chains; the small (or glutamine) chain promotes the hydrolysis of glutamine to ammonia, which is used by the large (or ammonia) chain to synthesize carbamoyl phosphate. Tetramer of heterodimers (alpha,beta)4.

It catalyses the reaction hydrogencarbonate + L-glutamine + 2 ATP + H2O = carbamoyl phosphate + L-glutamate + 2 ADP + phosphate + 2 H(+). The catalysed reaction is L-glutamine + H2O = L-glutamate + NH4(+). The protein operates within amino-acid biosynthesis; L-arginine biosynthesis; carbamoyl phosphate from bicarbonate: step 1/1. It functions in the pathway pyrimidine metabolism; UMP biosynthesis via de novo pathway; (S)-dihydroorotate from bicarbonate: step 1/3. In terms of biological role, small subunit of the glutamine-dependent carbamoyl phosphate synthetase (CPSase). CPSase catalyzes the formation of carbamoyl phosphate from the ammonia moiety of glutamine, carbonate, and phosphate donated by ATP, constituting the first step of 2 biosynthetic pathways, one leading to arginine and/or urea and the other to pyrimidine nucleotides. The small subunit (glutamine amidotransferase) binds and cleaves glutamine to supply the large subunit with the substrate ammonia. The protein is Carbamoyl phosphate synthase small chain of Maridesulfovibrio salexigens (strain ATCC 14822 / DSM 2638 / NCIMB 8403 / VKM B-1763) (Desulfovibrio salexigens).